The sequence spans 442 residues: 3-isopropylmalate dehydratase large subunit (442 aa).

Cys347, Cys407, and Cys410 together coordinate [4Fe-4S] cluster.

This sequence belongs to the aconitase/IPM isomerase family. LeuC type 1 subfamily. In terms of assembly, heterodimer of LeuC and LeuD. [4Fe-4S] cluster serves as cofactor.

The catalysed reaction is (2R,3S)-3-isopropylmalate = (2S)-2-isopropylmalate. It participates in amino-acid biosynthesis; L-leucine biosynthesis; L-leucine from 3-methyl-2-oxobutanoate: step 2/4. In terms of biological role, catalyzes the isomerization between 2-isopropylmalate and 3-isopropylmalate, via the formation of 2-isopropylmaleate. This chain is 3-isopropylmalate dehydratase large subunit, found in Buchnera aphidicola subsp. Uroleucon helianthicola.